The chain runs to 463 residues: tRNA (guanine(10)-N(2))-methyltransferase TRMT11 (463 aa).

Alanine 2 carries the N-acetylalanine modification.

Belongs to the class I-like SAM-binding methyltransferase superfamily. TRM11 methyltransferase family. As to quaternary structure, part of the heterodimeric TRMT11-TRM112 methyltransferase complex; this complex forms an active tRNA methyltransferase, where TRMT112 acts as an activator of the catalytic subunit TRMT11.

It is found in the cytoplasm. It catalyses the reaction guanosine(10) in tRNA + S-adenosyl-L-methionine = N(2)-methylguanosine(10) in tRNA + S-adenosyl-L-homocysteine + H(+). Functionally, catalytic subunit of the TRMT11-TRM112 methyltransferase complex, that specifically mediates the S-adenosyl-L-methionine-dependent N(2)-methylation of guanosine nucleotide at position 10 (m2G10) in tRNAs. This is one of the major tRNA (guanine-N(2))-methyltransferases. This Pongo abelii (Sumatran orangutan) protein is tRNA (guanine(10)-N(2))-methyltransferase TRMT11.